The chain runs to 299 residues: Leucine zipper transcription factor-like protein 1 (299 aa).

Residues Leu88–Glu296 adopt a coiled-coil conformation. The segment at Gly145–Asp299 is interaction with BSS9.

The protein belongs to the LZTFL1 family. In terms of assembly, self-associates. Interacts with BBS9; the interaction mediates the association of LZTL1 with the BBsome complex and regulates BBSome ciliary trafficking.

It is found in the cytoplasm. Functionally, regulates ciliary localization of the BBSome complex. Together with the BBSome complex, controls SMO ciliary trafficking and contributes to the sonic hedgehog (SHH) pathway regulation. May play a role in neurite outgrowth. May have tumor suppressor function. This chain is Leucine zipper transcription factor-like protein 1 (LZTFL1), found in Macaca fascicularis (Crab-eating macaque).